The chain runs to 301 residues: Acetyl-coenzyme A carboxylase carboxyl transferase subunit beta (301 aa).

The CoA carboxyltransferase N-terminal domain occupies 25-294 (LWIKDPSTGE…NSDAPAPQKP (270 aa)).

This sequence belongs to the AccD/PCCB family. In terms of assembly, acetyl-CoA carboxylase is a heterohexamer composed of biotin carboxyl carrier protein (AccB), biotin carboxylase (AccC) and two subunits each of ACCase subunit alpha (AccA) and ACCase subunit beta (AccD).

The protein localises to the cytoplasm. It carries out the reaction N(6)-carboxybiotinyl-L-lysyl-[protein] + acetyl-CoA = N(6)-biotinyl-L-lysyl-[protein] + malonyl-CoA. The protein operates within lipid metabolism; malonyl-CoA biosynthesis; malonyl-CoA from acetyl-CoA: step 1/1. Its function is as follows. Component of the acetyl coenzyme A carboxylase (ACC) complex. Biotin carboxylase (BC) catalyzes the carboxylation of biotin on its carrier protein (BCCP) and then the CO(2) group is transferred by the transcarboxylase to acetyl-CoA to form malonyl-CoA. The sequence is that of Acetyl-coenzyme A carboxylase carboxyl transferase subunit beta from Brucella abortus (strain 2308).